The following is a 169-amino-acid chain: S-ribosylhomocysteine lyase (169 aa).

Fe cation-binding residues include His54, His58, and Cys128.

This sequence belongs to the LuxS family. In terms of assembly, homodimer. It depends on Fe cation as a cofactor.

The catalysed reaction is S-(5-deoxy-D-ribos-5-yl)-L-homocysteine = (S)-4,5-dihydroxypentane-2,3-dione + L-homocysteine. In terms of biological role, involved in the synthesis of autoinducer 2 (AI-2) which is secreted by bacteria and is used to communicate both the cell density and the metabolic potential of the environment. The regulation of gene expression in response to changes in cell density is called quorum sensing. Catalyzes the transformation of S-ribosylhomocysteine (RHC) to homocysteine (HC) and 4,5-dihydroxy-2,3-pentadione (DPD). This is S-ribosylhomocysteine lyase from Shewanella sp. (strain MR-7).